Here is a 330-residue protein sequence, read N- to C-terminus: Glycerol-3-phosphate dehydrogenase [NAD(P)+] (330 aa).

NADPH contacts are provided by W11, R33, and K105. 3 residues coordinate sn-glycerol 3-phosphate: K105, G133, and S135. A137 is an NADPH binding site. K188, D241, S251, R252, and N253 together coordinate sn-glycerol 3-phosphate. K188 (proton acceptor) is an active-site residue. R252 contacts NADPH. NADPH is bound by residues V276 and E278.

It belongs to the NAD-dependent glycerol-3-phosphate dehydrogenase family.

The protein localises to the cytoplasm. It catalyses the reaction sn-glycerol 3-phosphate + NAD(+) = dihydroxyacetone phosphate + NADH + H(+). It carries out the reaction sn-glycerol 3-phosphate + NADP(+) = dihydroxyacetone phosphate + NADPH + H(+). The protein operates within membrane lipid metabolism; glycerophospholipid metabolism. Functionally, catalyzes the reduction of the glycolytic intermediate dihydroxyacetone phosphate (DHAP) to sn-glycerol 3-phosphate (G3P), the key precursor for phospholipid synthesis. This chain is Glycerol-3-phosphate dehydrogenase [NAD(P)+], found in Acidovorax ebreus (strain TPSY) (Diaphorobacter sp. (strain TPSY)).